The sequence spans 468 residues: 55 kDa erythrocyte membrane protein (468 aa).

The PDZ domain occupies 73 to 154; that stretch reads LVQFEKVTEE…MVSIKVIPNQ (82 aa). Residues 160–230 enclose the SH3 domain; sequence ALQMFMRAQF…PSPELQEWRV (71 aa). The Guanylate kinase-like domain maps to 284–453; the sequence is RKTLVLIGAS…SLKLLEEAFE (170 aa).

The protein belongs to the MAGUK family.

The protein resides in the membrane. It is found in the cell projection. It localises to the stereocilium. May play a role in the regulation of neutrophil polarization. The polypeptide is 55 kDa erythrocyte membrane protein (MPP1) (Gallus gallus (Chicken)).